A 605-amino-acid polypeptide reads, in one-letter code: Isocitrate dehydrogenase kinase/phosphatase (605 aa).

ATP is bound by residues 327-333 and Lys-348; that span reads APGIKGL. The active site involves Asp-383.

It belongs to the AceK family.

It is found in the cytoplasm. The enzyme catalyses L-seryl-[isocitrate dehydrogenase] + ATP = O-phospho-L-seryl-[isocitrate dehydrogenase] + ADP + H(+). In terms of biological role, bifunctional enzyme which can phosphorylate or dephosphorylate isocitrate dehydrogenase (IDH) on a specific serine residue. This is a regulatory mechanism which enables bacteria to bypass the Krebs cycle via the glyoxylate shunt in response to the source of carbon. When bacteria are grown on glucose, IDH is fully active and unphosphorylated, but when grown on acetate or ethanol, the activity of IDH declines drastically concomitant with its phosphorylation. The protein is Isocitrate dehydrogenase kinase/phosphatase of Burkholderia lata (strain ATCC 17760 / DSM 23089 / LMG 22485 / NCIMB 9086 / R18194 / 383).